The chain runs to 507 residues: MVTMRADEISNIIRERIEQYNREVKVVNTGTVLQVGDGIARIHGLDEVMAGELVEFEEGTIGIALNLESNNVGVVLMGDGLMIQEGSSVKATGRIAQIPVSEAYLGRVINALAKPIDGRGEISAYESRLIESPAPGIISRRSVYEPLQTGLIAIDSMIPIGRGQRELIIGDRQTGKTAVATDTILNQKGQNVICVYVAIGQKASSVAQVVTTFQERGAMEYTIVVAEMADSPATLQYLAPYTGAALAEYFMYRERHTSIIYDDPSKQAQAYRQMSLLLRRPPGREAYPGDVFYLHSRLLERAAKLSSRLGEGSMTALPIVETQSGDVSAYIPTNVISITDGQIFLSADLFNAGIRPAINVGISVSRVGSAAQIKAMKQVAGKSKLELAQFAELEAFAQFASDLDKATQNQLARGQRLRELLKQSQSAPLTVEEQIVTIYTGANGYLDSLEIGQVKKFLVQLRTYLKTNKPQFQEIISSTRTFTEQAEALLKEIIQEQIELFLLQEQT.

170–177 (GDRQTGKT) contacts ATP.

Belongs to the ATPase alpha/beta chains family. F-type ATPases have 2 components, CF(1) - the catalytic core - and CF(0) - the membrane proton channel. CF(1) has five subunits: alpha(3), beta(3), gamma(1), delta(1), epsilon(1). CF(0) has four main subunits: a, b, b' and c.

The protein localises to the plastid. The protein resides in the chloroplast thylakoid membrane. It carries out the reaction ATP + H2O + 4 H(+)(in) = ADP + phosphate + 5 H(+)(out). Produces ATP from ADP in the presence of a proton gradient across the membrane. The alpha chain is a regulatory subunit. In Chloranthus spicatus (Chulantree), this protein is ATP synthase subunit alpha, chloroplastic.